The sequence spans 384 residues: Deoxyguanosinetriphosphate triphosphohydrolase-like protein (384 aa).

The disordered stretch occupies residues Leu13 to Asp42. Over residues His28–Asp42 the composition is skewed to basic and acidic residues. Positions Arg73–Asn208 constitute an HD domain.

Belongs to the dGTPase family. Type 2 subfamily.

The sequence is that of Deoxyguanosinetriphosphate triphosphohydrolase-like protein from Bordetella bronchiseptica (strain ATCC BAA-588 / NCTC 13252 / RB50) (Alcaligenes bronchisepticus).